The following is a 269-amino-acid chain: Propanediol uptake facilitator PduF (269 aa).

A run of 2 helical transmembrane segments spans residues 10 to 30 (IAEF…LSAL) and 42 to 62 (ICII…GISG). The NPA 1 motif lies at 66-68 (NPA). 3 helical membrane-spanning segments follow: residues 69–89 (ITIA…PYTV), 143–163 (VWQA…MIMA), and 179–199 (LLIG…TGFA). Residues 201–203 (NPA) carry the NPA 2 motif. The helical transmembrane segment at 228–248 (IPYFIVPIVAPIIGACAGAAI) threads the bilayer.

Belongs to the MIP/aquaporin (TC 1.A.8) family.

It localises to the cell inner membrane. Its function is as follows. Probably facilitates diffusion of 1,2-propanediol (1,2-PD) into the cell. This is Propanediol uptake facilitator PduF from Citrobacter freundii.